A 76-amino-acid chain; its full sequence is Defensin-like protein 125 (76 aa).

A signal peptide spans 1 to 25; it reads MTKAITLAIFMVVLVLGMVTKETQG. 4 disulfides stabilise this stretch: Cys30-Cys74, Cys41-Cys60, Cys46-Cys68, and Cys50-Cys70.

It belongs to the DEFL family.

It is found in the secreted. This is Defensin-like protein 125 (LCR54) from Arabidopsis thaliana (Mouse-ear cress).